Consider the following 209-residue polypeptide: Lysine-rich arabinogalactan protein 18 (209 aa).

Positions 1–21 (MDRNFLLTVTLICIVVAGVGG) are cleaved as a signal peptide. Positions 21-185 (GQSPISSPTK…PSADDQSGAA (165 aa)) are disordered. Residues 23–79 (SPISSPTKSPTTPSAPTTSPTKSPAVTSPTTAPAKTPTASASSPVESPKSPAPVSES) show a composition bias toward low complexity. Pro residues-rich tracts occupy residues 80–95 (SPPP…PVPA) and 103–119 (SSPP…PAPV). The span at 132–145 (SKHKKTTKKSKKHQ) shows a compositional bias: basic residues. Residues 149-164 (APAPELLGPPAPPTES) show a composition bias toward pro residues. Gly-183 carries GPI-anchor amidated glycine lipidation. The propeptide at 184–209 (AASTRVLRNVAVGAVATAWAVLVMAF) is removed in mature form.

It belongs to the lysine-rich AGP family. O-glycosylated on the hydroxyproline residues. Predominantly expressed in flowers, and moderately expressed in roots, stems and young leaves.

The protein localises to the cell membrane. Proteoglycan that seems to be implicated in diverse developmental roles such as differentiation, cell-cell recognition, embryogenesis and programmed cell death. This chain is Lysine-rich arabinogalactan protein 18 (AGP18), found in Arabidopsis thaliana (Mouse-ear cress).